A 25-amino-acid chain; its full sequence is Aggression-stimulating peptide (25 aa).

In terms of tissue distribution, expressed by the skin glands of male frogs.

The protein localises to the secreted. Functionally, stimulates aggressive behavior in male frogs. No effect on female frogs. This chain is Aggression-stimulating peptide, found in Leptodactylus fallax (Mountain chicken frog).